Reading from the N-terminus, the 874-residue chain is Collagen alpha-2(I) chain (874 aa).

The disordered stretch occupies residues 1 to 874 (SGGFDFSFLP…FGYEGDFYRA (874 aa)). 4-hydroxyproline occurs at positions 10 and 13. K16 bears the Allysine mark. The segment covering 27 to 66 (LMGPRGPPGASGAPGPQGFQGPAGEPGEPGQTGPAGARGP) has biased composition (low complexity). Residues P34 and P40 each carry the 4-hydroxyproline modification. K93 is modified (5-hydroxylysine; alternate). Residue K93 is glycosylated (O-linked (Gal...) hydroxylysine; alternate). Low complexity-rich tracts occupy residues 110 to 143 (ARGRVGAPGPAGARGSDGSVGPVGPAGPIGSAGP), 188 to 209 (PGANGLTGAKGAAGLPGVAGAP), and 218 to 236 (PGPVGARGLVGEPGPAGSK). Gly residues predominate over residues 237 to 246 (GESGGKGEPG). Over residues 247 to 257 (SAGPQGPPGSS) the composition is skewed to low complexity. A 4-hydroxyproline mark is found at P317 and P320. 3 stretches are compositionally biased toward low complexity: residues 346–365 (LPGIDGRPGPIGPAGARGEA), 434–451 (PGESGAVGPSGAIGSRGP), and 463–473 (EPGVVGAPGTA). The segment covering 474–483 (GPAGSGGLPG) has biased composition (gly residues). 2 stretches are compositionally biased toward low complexity: residues 491 to 538 (RGEV…PRGS) and 545 to 565 (VGPAGPNGFAGPAGAAGQPGA). Basic and acidic residues predominate over residues 566-575 (KGERGTKGPK). Over residues 583 to 593 (PTGPVGSAGPA) the composition is skewed to low complexity. Residues 603–612 (GSRGDGGPPG) are compositionally biased toward gly residues. Low complexity predominate over residues 614–623 (TGFPGAAGRT). The segment covering 648-662 (GPVGRGETGAGGPPG) has biased composition (gly residues). Composition is skewed to low complexity over residues 663 to 697 (FTGEKGPSGEPGTAGPPGTAGPQGLLGAPGILGLP) and 705 to 724 (LPGVAGAVGEPGPLGIAGPP). Residues 725–744 (GARGDGNPGSDGPPGRGAAG) are compositionally biased toward gly residues. Low complexity-rich tracts occupy residues 745–755 (APGPHGTVGPA) and 763–778 (EPGPVGSVGPVGALGP).

This sequence belongs to the fibrillar collagen family. In terms of assembly, trimers of one alpha 2(I) and two alpha 1(I) chains. Interacts (via C-terminus) with TMEM131 (via PapD-L domain); the interaction is direct and is involved in assembly and TRAPPIII ER-to-Golgi transport complex-dependent secretion of collagen. Post-translationally, prolines at the third position of the tripeptide repeating unit (G-X-Y) are hydroxylated in some or all of the chains. Expressed in bones.

The protein localises to the secreted. It localises to the extracellular space. It is found in the extracellular matrix. Functionally, type I collagen is a member of group I collagen (fibrillar forming collagen). The protein is Collagen alpha-2(I) chain of Megalonyx jeffersonii (Jefferson's ground sloth).